Reading from the N-terminus, the 137-residue chain is Large ribosomal subunit protein uL16 (137 aa).

The segment covering Met-1–Arg-16 has biased composition (basic residues). Residues Met-1–Gln-22 are disordered.

The protein belongs to the universal ribosomal protein uL16 family. As to quaternary structure, part of the 50S ribosomal subunit.

Binds 23S rRNA and is also seen to make contacts with the A and possibly P site tRNAs. The polypeptide is Large ribosomal subunit protein uL16 (Idiomarina loihiensis (strain ATCC BAA-735 / DSM 15497 / L2-TR)).